We begin with the raw amino-acid sequence, 228 residues long: Methylthioribulose-1-phosphate dehydratase (228 aa).

Cys-92 is a binding site for substrate. Positions 110 and 112 each coordinate Zn(2+). The Proton donor/acceptor role is filled by Glu-135. His-192 lines the Zn(2+) pocket.

This sequence belongs to the aldolase class II family. MtnB subfamily. The cofactor is Zn(2+).

The protein localises to the cytoplasm. Its subcellular location is the nucleus. The catalysed reaction is 5-(methylsulfanyl)-D-ribulose 1-phosphate = 5-methylsulfanyl-2,3-dioxopentyl phosphate + H2O. The protein operates within amino-acid biosynthesis; L-methionine biosynthesis via salvage pathway; L-methionine from S-methyl-5-thio-alpha-D-ribose 1-phosphate: step 2/6. Catalyzes the dehydration of methylthioribulose-1-phosphate (MTRu-1-P) into 2,3-diketo-5-methylthiopentyl-1-phosphate (DK-MTP-1-P). This Schizosaccharomyces pombe (strain 972 / ATCC 24843) (Fission yeast) protein is Methylthioribulose-1-phosphate dehydratase.